A 117-amino-acid chain; its full sequence is NADH-ubiquinone oxidoreductase chain 3 (117 aa).

3 helical membrane passes run 1-21 (MLSLTYIVGIASALVIILLLV), 56-76 (FFLVAILFLLFDLEIALILPY), and 86-106 (TFYNYWLVMLLVVVLTFGLMY).

It belongs to the complex I subunit 3 family.

It localises to the mitochondrion membrane. It catalyses the reaction a ubiquinone + NADH + 5 H(+)(in) = a ubiquinol + NAD(+) + 4 H(+)(out). Functionally, core subunit of the mitochondrial membrane respiratory chain NADH dehydrogenase (Complex I) that is believed to belong to the minimal assembly required for catalysis. Complex I functions in the transfer of electrons from NADH to the respiratory chain. The immediate electron acceptor for the enzyme is believed to be ubiquinone. The sequence is that of NADH-ubiquinone oxidoreductase chain 3 (ND3) from Branchiostoma lanceolatum (Common lancelet).